The chain runs to 352 residues: C-X-C chemokine receptor type 4 (352 aa).

The important for chemokine binding and signaling stretch occupies residues 1-21 (MEGISIYTSDNYTEEMGSGDY). Over 1–38 (MEGISIYTSDNYTEEMGSGDYDSIKEPCFREENAHFNR) the chain is Extracellular. Tyrosine 7 is modified (sulfotyrosine). The N-linked (GlcNAc...) asparagine glycan is linked to asparagine 11. Sulfotyrosine is present on tyrosine 12. The O-linked (Xyl...) (chondroitin sulfate) serine glycan is linked to serine 18. Sulfotyrosine is present on tyrosine 21. Cystine bridges form between cysteine 28/cysteine 274 and cysteine 109/cysteine 186. The helical transmembrane segment at 39–63 (IFLPTIYSIIFLTGIVGNGLVILVM) threads the bilayer. At 64 to 77 (GYQKKLRSMTDKYR) the chain is on the cytoplasmic side. A helical transmembrane segment spans residues 78 to 99 (LHLSVADLLFVITLPFWAVDAV). Residues 94-97 (WAVD) form a chemokine binding region. Over 100–110 (ANWYFGNFLCK) the chain is Extracellular. A helical membrane pass occupies residues 111–130 (AVHVIYTVNLYSSVLILAFI). The segment at 113-117 (HVIYT) is chemokine binding. The Cytoplasmic segment spans residues 131–154 (SLDRYLAIVHATNSQKPRKLLAEK). The short motif at 133–135 (DRY) is the Important for signaling element. The tract at residues 135-147 (YLAIVHATNSQKP) is involved in dimerization; when bound to chemokine. A helical membrane pass occupies residues 155-174 (VVYVGVWIPALLLTIPDFIF). Over 175-195 (ASVSEADDRYICDRFYPNDLW) the chain is Extracellular. Residues 186 to 190 (CDRFY) are chemokine binding, important for signaling. The tract at residues 191–210 (PNDLWVVVFQFQHIMVGLIL) is involved in dimerization. Residues 196-216 (VVVFQFQHIMVGLILPGIDIL) traverse the membrane as a helical segment. At 217–241 (SCYCIIISKLSHSKGHQKRKALKTT) the chain is on the cytoplasmic side. A helical membrane pass occupies residues 242–261 (VILILAFFACWLPYYIGISI). The Extracellular portion of the chain corresponds to 262–282 (DSFILLEIIKQGCEFENTVHK). The tract at residues 266–268 (LLE) is involved in dimerization. The helical transmembrane segment at 283-302 (WISITEALAFFHCCLNPILY) threads the bilayer. At 303–352 (AFLGAKFKTSAQHALTSVSRGSSLKILSKGKRGGHSSVSTESESSSFHSS) the chain is on the cytoplasmic side. 2 positions are modified to phosphoserine: serine 319 and serine 321. Serine 324 and serine 325 each carry phosphoserine; by PKC and GRK6. A disordered region spans residues 329-352 (LSKGKRGGHSSVSTESESSSFHSS). Serine 330 is subject to Phosphoserine; by GRK6. Residue lysine 331 forms a Glycyl lysine isopeptide (Lys-Gly) (interchain with G-Cter in ubiquitin) linkage. Over residues 337–352 (HSSVSTESESSSFHSS) the composition is skewed to low complexity. Serine 339 is modified (phosphoserine; by GRK6). Residues serine 348 and serine 351 each carry the phosphoserine modification.

Belongs to the G-protein coupled receptor 1 family. In terms of assembly, monomer. Can form homodimers. Interacts with CD164. Interacts with ARRB2; the interaction is dependent on the C-terminal phosphorylation of CXCR4 and allows activation of MAPK1 and MAPK3. Interacts with ARR3; the interaction is dependent on the C-terminal phosphorylation of CXCR4 and modulates calcium mobilization. Interacts with RNF113A; the interaction, enhanced by CXCL12, promotes CXCR4 ubiquitination and subsequent degradation. Interacts (via the cytoplasmic C-terminal) with ITCH (via the WW domains I and II); the interaction, enhanced by CXCL12, promotes CXCR4 ubiquitination and leads to its degradation. Interacts with extracellular ubiquitin. Interacts with DBN1; this interaction is enhanced by antigenic stimulation. Following LPS binding, may form a complex with GDF5, HSP90AA1 and HSPA8. Post-translationally, phosphorylated on agonist stimulation. Rapidly phosphorylated on serine and threonine residues in the C-terminal. Phosphorylation at Ser-324 and Ser-325 leads to recruitment of ITCH, ubiquitination and protein degradation. In terms of processing, ubiquitinated after ligand binding, leading to its degradation. Ubiquitinated by ITCH at the cell membrane on agonist stimulation. The ubiquitin-dependent mechanism, endosomal sorting complex required for transport (ESCRT), then targets CXCR4 for lysosomal degradation. This process is dependent also on prior Ser-/Thr-phosphorylation in the C-terminal of CXCR4. Also binding of ARRB1 to STAM negatively regulates CXCR4 sorting to lysosomes though modulating ubiquitination of SFR5S. Sulfation is required for efficient binding of CXCL12/SDF-1alpha and promotes its dimerization. Post-translationally, O- and N-glycosylated. N-glycosylation can mask coreceptor function. The O-glycosylation chondroitin sulfate attachment does not affect interaction with CXCL12/SDF-1alpha nor its coreceptor activity.

The protein localises to the cell membrane. Its subcellular location is the cell junction. The protein resides in the early endosome. It is found in the late endosome. It localises to the lysosome. Its function is as follows. Receptor for the C-X-C chemokine CXCL12/SDF-1 that transduces a signal by increasing intracellular calcium ion levels and enhancing MAPK1/MAPK3 activation. Involved in the AKT signaling cascade. Plays a role in regulation of cell migration, e.g. during wound healing. Acts as a receptor for extracellular ubiquitin; leading to enhanced intracellular calcium ions and reduced cellular cAMP levels. Binds bacterial lipopolysaccharide (LPS) et mediates LPS-induced inflammatory response, including TNF secretion by monocytes. Involved in hematopoiesis and in cardiac ventricular septum formation. Also plays an essential role in vascularization of the gastrointestinal tract, probably by regulating vascular branching and/or remodeling processes in endothelial cells. Involved in cerebellar development. In the CNS, could mediate hippocampal-neuron survival. The sequence is that of C-X-C chemokine receptor type 4 (CXCR4) from Macaca mulatta (Rhesus macaque).